A 138-amino-acid chain; its full sequence is Cysteine desulfuration protein SufE (138 aa).

The active-site Cysteine persulfide intermediate is the C51.

The protein belongs to the SufE family. In terms of assembly, homodimer. Interacts with SufS.

Its subcellular location is the cytoplasm. It participates in cofactor biosynthesis; iron-sulfur cluster biosynthesis. Functionally, participates in cysteine desulfuration mediated by SufS. Cysteine desulfuration mobilizes sulfur from L-cysteine to yield L-alanine and constitutes an essential step in sulfur metabolism for biosynthesis of a variety of sulfur-containing biomolecules. Functions as a sulfur acceptor for SufS, by mediating the direct transfer of the sulfur atom from the S-sulfanylcysteine of SufS, an intermediate product of cysteine desulfuration process. This is Cysteine desulfuration protein SufE from Escherichia coli O81 (strain ED1a).